The primary structure comprises 554 residues: Muellerian-inhibiting factor (554 aa).

The N-terminal stretch at 1 to 24 (MQGPHLSPLVLLLATMGAVLQPEA) is a signal peptide. Residues 25–446 (VENLATNTRG…GREGRGRTGR (422 aa)) constitute a propeptide that is removed on maturation. 3 N-linked (GlcNAc...) asparagine glycosylation sites follow: Asn-62, Asn-326, and Asn-410. 3 cysteine pairs are disulfide-bonded: Cys-456-Cys-520, Cys-482-Cys-551, and Cys-486-Cys-553.

The protein belongs to the TGF-beta family. Homodimer; disulfide-linked. In terms of processing, preproprotein is proteolytically processed to generate N- and C-terminal cleavage products that homodimerize and associate to form a biologically active non-covalent complex. Binding of the non-covalent complex to AMHRII induces dissociation of the pro-region from the mature C-terminal dimer. The N-terminal portion of the protein, despite having no intrinsic activity, has the role of amplifying the activity of the C-terminus. Expressed in Sertoli cells of fetal testes, and in testes just after birth, but absent in adult testes. In female, AMH is expressed after birth in the granulosa cells of the follicle.

It localises to the secreted. Plays an important role in several reproductive functions, including Muellerian duct regression during male fetal sexua,l differentiation and in the adult plays a role in Leydig cell differentiation and function. In female acts as a negative regulator of the primordial to primary follicle transition and decreases FSH sensitivity of growing follicles. Binds to its sole type II receptor, AMHR2 that recruits type I receptors ACVR1 and BMPR1A which subsequently activates the Smad pathway. The sequence is that of Muellerian-inhibiting factor (Amh) from Mus musculus (Mouse).